The chain runs to 371 residues: Anhydro-N-acetylmuramic acid kinase (371 aa).

9–16 (GTSMDGID) provides a ligand contact to ATP.

This sequence belongs to the anhydro-N-acetylmuramic acid kinase family.

The enzyme catalyses 1,6-anhydro-N-acetyl-beta-muramate + ATP + H2O = N-acetyl-D-muramate 6-phosphate + ADP + H(+). It participates in amino-sugar metabolism; 1,6-anhydro-N-acetylmuramate degradation. Its pathway is cell wall biogenesis; peptidoglycan recycling. Its function is as follows. Catalyzes the specific phosphorylation of 1,6-anhydro-N-acetylmuramic acid (anhMurNAc) with the simultaneous cleavage of the 1,6-anhydro ring, generating MurNAc-6-P. Is required for the utilization of anhMurNAc either imported from the medium or derived from its own cell wall murein, and thus plays a role in cell wall recycling. This chain is Anhydro-N-acetylmuramic acid kinase, found in Azorhizobium caulinodans (strain ATCC 43989 / DSM 5975 / JCM 20966 / LMG 6465 / NBRC 14845 / NCIMB 13405 / ORS 571).